The following is a 175-amino-acid chain: Crossover junction endodeoxyribonuclease RuvC (175 aa).

Residues Asp-16, Glu-76, and Asp-148 contribute to the active site. Positions 16, 76, and 148 each coordinate Mg(2+).

The protein belongs to the RuvC family. In terms of assembly, homodimer which binds Holliday junction (HJ) DNA. The HJ becomes 2-fold symmetrical on binding to RuvC with unstacked arms; it has a different conformation from HJ DNA in complex with RuvA. In the full resolvosome a probable DNA-RuvA(4)-RuvB(12)-RuvC(2) complex forms which resolves the HJ. Mg(2+) serves as cofactor.

The protein resides in the cytoplasm. The catalysed reaction is Endonucleolytic cleavage at a junction such as a reciprocal single-stranded crossover between two homologous DNA duplexes (Holliday junction).. Functionally, the RuvA-RuvB-RuvC complex processes Holliday junction (HJ) DNA during genetic recombination and DNA repair. Endonuclease that resolves HJ intermediates. Cleaves cruciform DNA by making single-stranded nicks across the HJ at symmetrical positions within the homologous arms, yielding a 5'-phosphate and a 3'-hydroxyl group; requires a central core of homology in the junction. The consensus cleavage sequence is 5'-(A/T)TT(C/G)-3'. Cleavage occurs on the 3'-side of the TT dinucleotide at the point of strand exchange. HJ branch migration catalyzed by RuvA-RuvB allows RuvC to scan DNA until it finds its consensus sequence, where it cleaves and resolves the cruciform DNA. This is Crossover junction endodeoxyribonuclease RuvC from Rhodopseudomonas palustris (strain BisB18).